The following is a 365-amino-acid chain: Chorismate synthase (365 aa).

NADP(+) contacts are provided by Arg48 and Arg54. FMN contacts are provided by residues 131–133, 243–244, Gly288, 303–307, and Arg329; these read RSS, NA, and KPTSS.

Belongs to the chorismate synthase family. In terms of assembly, homotetramer. FMNH2 serves as cofactor.

The enzyme catalyses 5-O-(1-carboxyvinyl)-3-phosphoshikimate = chorismate + phosphate. It functions in the pathway metabolic intermediate biosynthesis; chorismate biosynthesis; chorismate from D-erythrose 4-phosphate and phosphoenolpyruvate: step 7/7. Its function is as follows. Catalyzes the anti-1,4-elimination of the C-3 phosphate and the C-6 proR hydrogen from 5-enolpyruvylshikimate-3-phosphate (EPSP) to yield chorismate, which is the branch point compound that serves as the starting substrate for the three terminal pathways of aromatic amino acid biosynthesis. This reaction introduces a second double bond into the aromatic ring system. This is Chorismate synthase from Rhizobium etli (strain ATCC 51251 / DSM 11541 / JCM 21823 / NBRC 15573 / CFN 42).